The primary structure comprises 319 residues: MKKIAVLTSGGDAPGMNAAVRAVVRKAMYYDIEVYGVYQGYQGLINNNIKKMERGTVGDKIQRGGTFLQSARCPEFKDPEVRKQAIANLNNLGIEGLVVIGGDGSYRGAQRLNEEGIKTIGIPGTIDNDINGTDFTIGFDTALNTIVEAIDKIRDTASSHERTFIVEVMGRDAGDLALWSGLAGGAETVLCPEHRKDVKVIADKIQQGIERGKKHSIIVVAEGVMTGEECGQELKKYINVDTRISVLGHMQRGGSPSGMDRVLASRLGGYAVELLMNDETGLAVGIQNNSLSKTKFEDIFTSVHHLDEKMYELSNELSI.

Gly-11 is a binding site for ATP. 21-25 (RAVVR) provides a ligand contact to ADP. Residues 72–73 (RC) and 102–105 (GDGS) contribute to the ATP site. Asp-103 serves as a coordination point for Mg(2+). Residue 125 to 127 (TID) participates in substrate binding. Asp-127 (proton acceptor) is an active-site residue. Residue Arg-154 coordinates ADP. Substrate is bound by residues Arg-162 and 169–171 (MGR). Residues 185–187 (GAE), Arg-211, and 213–215 (KKH) contribute to the ADP site. Residues Glu-222, Arg-243, and 249 to 252 (HMQR) each bind substrate.

The protein belongs to the phosphofructokinase type A (PFKA) family. ATP-dependent PFK group I subfamily. Prokaryotic clade 'B1' sub-subfamily. Homotetramer. Mg(2+) is required as a cofactor.

The protein resides in the cytoplasm. The catalysed reaction is beta-D-fructose 6-phosphate + ATP = beta-D-fructose 1,6-bisphosphate + ADP + H(+). Its pathway is carbohydrate degradation; glycolysis; D-glyceraldehyde 3-phosphate and glycerone phosphate from D-glucose: step 3/4. With respect to regulation, allosterically activated by ADP and other diphosphonucleosides, and allosterically inhibited by phosphoenolpyruvate. In terms of biological role, catalyzes the phosphorylation of D-fructose 6-phosphate to fructose 1,6-bisphosphate by ATP, the first committing step of glycolysis. The protein is ATP-dependent 6-phosphofructokinase of Macrococcus caseolyticus (strain JCSC5402) (Macrococcoides caseolyticum).